The sequence spans 311 residues: MEKELIFGHRNPDTDAIGTAIAYSYFQNQHGYNTEAVALGEANDETSFALKKFGFEAPRVVKTVANEVKAIMLVDHNEPQQSVEDRDQVKVTHVIDHHRISNFATIDPLFYRAEPVGCTSTVLWEMFKEQNMEIPANIAGIMLSAIISDTLLLKSPTTTDIDKEAVEELAKIAGVDYKEYGLELLKAGTNIAAKSVEELIDLDAKSFELGSKTARIAQVNVVDVPEALERKDAFLAAMEKDAKANGYDLFMLVITNVLDSDSEVLFIGDDESKSVFAKAFGKELVDSEAHLLGVVSRKKQIVPPLTRAFEA.

Mn(2+) contacts are provided by His9, Asp13, Asp15, Asp75, His97, and Asp149.

This sequence belongs to the PPase class C family. Mn(2+) is required as a cofactor.

It localises to the cytoplasm. It carries out the reaction diphosphate + H2O = 2 phosphate + H(+). This is Probable manganese-dependent inorganic pyrophosphatase from Lactobacillus delbrueckii subsp. bulgaricus (strain ATCC BAA-365 / Lb-18).